Consider the following 1096-residue polypeptide: Phospholipase D zeta 1 (1096 aa).

At Ala-2 the chain carries N-acetylalanine. Residues 50–204 (PKAVIVSVSR…REVCRFLEVS (155 aa)) enclose the PX domain. Residues 131 to 152 (VQDEDADEVPLHQDESAKNRDV) form a disordered region. A compositionally biased stretch (basic and acidic residues) spans 139–151 (VPLHQDESAKNRD). Residues 234–342 (DDSNRCCGCC…WVASINDAAL (109 aa)) enclose the PH domain. Residues 477–504 (YLWSHHEKLVIVDNQVCFIGGLDLCFGR) form the PLD phosphodiesterase 1 domain. Residues His-482, Lys-484, and Asp-489 contribute to the active site. Residues 607 to 632 (GRQEESDIESKKEEDSIRGIRRDDSF) are compositionally biased toward basic and acidic residues. The tract at residues 607 to 691 (GRQEESDIES…DGDTPMRGFV (85 aa)) is disordered. Residues 892 to 919 (SQVYVHSKIMIVDDRAALIGSANINDRS) enclose the PLD phosphodiesterase 2 domain. Active-site residues include His-897, Lys-899, and Asp-904.

Belongs to the phospholipase D family. PXPH-PLD subfamily. It depends on Does not require Ca(2+) or any other cation for activity. as a cofactor. As to expression, expressed in inflorescences, flowers, siliques, stems, leaves, and roots. Highest expression in roots.

The protein localises to the cytoplasmic vesicle. It catalyses the reaction a 1,2-diacyl-sn-glycero-3-phosphocholine + H2O = a 1,2-diacyl-sn-glycero-3-phosphate + choline + H(+). With respect to regulation, calcium-independent and PIP2-dependent. Its function is as follows. Hydrolyzes glycerol-phospholipids at the terminal phosphodiesteric bond to generate phosphatidic acids (PA). Phosphatidylcholine-selective. Regulates root-hair morphogenesis. Contributes to the supply of inorganic phosphorus for cell metabolism and diacylglycerol moieties for galactolipid synthesis in phosphorus-starved roots. Involved in root elongation during phosphate limitation. This chain is Phospholipase D zeta 1, found in Arabidopsis thaliana (Mouse-ear cress).